The following is a 144-amino-acid chain: Large-conductance mechanosensitive channel (144 aa).

2 helical membrane passes run 16–36 (VIDLAVGVIIGAAFGKIVDSV) and 86–106 (GNFLTIVVNFVILAFIIFMMV).

It belongs to the MscL family. As to quaternary structure, homopentamer.

Its subcellular location is the cell inner membrane. Its function is as follows. Channel that opens in response to stretch forces in the membrane lipid bilayer. May participate in the regulation of osmotic pressure changes within the cell. This Cupriavidus metallidurans (strain ATCC 43123 / DSM 2839 / NBRC 102507 / CH34) (Ralstonia metallidurans) protein is Large-conductance mechanosensitive channel.